A 333-amino-acid chain; its full sequence is Structure-specific endonuclease subunit SLX1 homolog (333 aa).

Positions 68–157 constitute a GIY-YIG domain; it reads DFFGVYCLLS…KSRRLRLLNL (90 aa). The SLX1-type zinc-finger motif lies at 237–293; that stretch reads CSLCLKPILSISELLRCHANETCKSHFHMRCLSKHALNAVDEYRTSLFPIQGQCPKC.

The protein belongs to the SLX1 family. Forms a heterodimer with a member of the SLX4 family. It depends on a divalent metal cation as a cofactor.

Its subcellular location is the nucleus. Catalytic subunit of a heterodimeric structure-specific endonuclease that resolves DNA secondary structures generated during DNA repair and recombination. Has endonuclease activity towards branched DNA substrates, introducing single-strand cuts in duplex DNA close to junctions with ss-DNA. This Brugia malayi (Filarial nematode worm) protein is Structure-specific endonuclease subunit SLX1 homolog.